Consider the following 273-residue polypeptide: Dermonecrotic toxin LdSicTox-alphaIB1aiv (273 aa).

Histidine 5 is a catalytic residue. Residues glutamate 25 and aspartate 27 each contribute to the Mg(2+) site. Histidine 41 acts as the Nucleophile in catalysis. Cystine bridges form between cysteine 45–cysteine 51 and cysteine 47–cysteine 190. Aspartate 85 is a binding site for Mg(2+). An N-linked (GlcNAc...) asparagine glycan is attached at asparagine 250.

Belongs to the arthropod phospholipase D family. Class II subfamily. Mg(2+) is required as a cofactor. In terms of tissue distribution, expressed by the venom gland.

It is found in the secreted. The catalysed reaction is an N-(acyl)-sphingosylphosphocholine = an N-(acyl)-sphingosyl-1,3-cyclic phosphate + choline. It catalyses the reaction an N-(acyl)-sphingosylphosphoethanolamine = an N-(acyl)-sphingosyl-1,3-cyclic phosphate + ethanolamine. The enzyme catalyses a 1-acyl-sn-glycero-3-phosphocholine = a 1-acyl-sn-glycero-2,3-cyclic phosphate + choline. It carries out the reaction a 1-acyl-sn-glycero-3-phosphoethanolamine = a 1-acyl-sn-glycero-2,3-cyclic phosphate + ethanolamine. Dermonecrotic toxins cleave the phosphodiester linkage between the phosphate and headgroup of certain phospholipids (sphingolipid and lysolipid substrates), forming an alcohol (often choline) and a cyclic phosphate. This toxin acts on sphingomyelin (SM). It may also act on ceramide phosphoethanolamine (CPE), lysophosphatidylcholine (LPC) and lysophosphatidylethanolamine (LPE), but not on lysophosphatidylserine (LPS), and lysophosphatidylglycerol (LPG). It acts by transphosphatidylation, releasing exclusively cyclic phosphate products as second products. Induces dermonecrosis, hemolysis, increased vascular permeability, edema, inflammatory response, and platelet aggregation. This Loxosceles deserta (Desert recluse spider) protein is Dermonecrotic toxin LdSicTox-alphaIB1aiv.